The sequence spans 101 residues: Small ribosomal subunit protein uS10 (101 aa).

Belongs to the universal ribosomal protein uS10 family. In terms of assembly, part of the 30S ribosomal subunit.

Functionally, involved in the binding of tRNA to the ribosomes. In Amoebophilus asiaticus (strain 5a2), this protein is Small ribosomal subunit protein uS10.